Consider the following 200-residue polypeptide: Outer-membrane lipoprotein LolB (200 aa).

The signal sequence occupies residues 1–18; that stretch reads MRRGRLLIAGLAALVLSA. Cys-19 carries N-palmitoyl cysteine lipidation. A lipid anchor (S-diacylglycerol cysteine) is attached at Cys-19.

It belongs to the LolB family. In terms of assembly, monomer.

It localises to the cell outer membrane. In terms of biological role, plays a critical role in the incorporation of lipoproteins in the outer membrane after they are released by the LolA protein. In Alkalilimnicola ehrlichii (strain ATCC BAA-1101 / DSM 17681 / MLHE-1), this protein is Outer-membrane lipoprotein LolB.